The following is a 268-amino-acid chain: Nuclear protein UL4 homolog (268 aa).

Belongs to the alphaherpesvirinae HHV-1 UL4 family.

The protein localises to the host nucleus. This is Nuclear protein UL4 homolog (MDV016) from Gallid herpesvirus 2 (strain Chicken/Md5/ATCC VR-987) (GaHV-2).